A 178-amino-acid polypeptide reads, in one-letter code: MLEGVIRESITKANAKALKKDGYLIANVYGKGIENVNGAFKLNPFIKYLKEKKHLIFPVKLGDKTFEVVVQEYQKNPVTNELIHVDLLAVTKGVKSKFKVPIKHQGTPVGLKNKGILMLSKKRISVECAPEHLPDHYLVDVAPLDVNESILVRDLEKHENVKILDHDSIAVIGVIKAK.

The protein belongs to the bacterial ribosomal protein bL25 family. CTC subfamily. Part of the 50S ribosomal subunit; part of the 5S rRNA/L5/L18/L25 subcomplex. Contacts the 5S rRNA. Binds to the 5S rRNA independently of L5 and L18.

Its function is as follows. This is one of the proteins that binds to the 5S RNA in the ribosome where it forms part of the central protuberance. The polypeptide is Large ribosomal subunit protein bL25 (Helicobacter pylori (strain ATCC 700392 / 26695) (Campylobacter pylori)).